Here is a 266-residue protein sequence, read N- to C-terminus: UPF0354 protein lwe1624 (266 aa).

This sequence belongs to the UPF0354 family.

In Listeria welshimeri serovar 6b (strain ATCC 35897 / DSM 20650 / CCUG 15529 / CIP 8149 / NCTC 11857 / SLCC 5334 / V8), this protein is UPF0354 protein lwe1624.